The chain runs to 1856 residues: Golgi-specific brefeldin A-resistance guanine nucleotide exchange factor 1 (1856 aa).

The tract at residues 1-211 (MVDKNIYIIQ…EPKSYVGTNM (211 aa)) is DCB (dimerization and cyclophiln-binding); DCB:DCB domain and DCB:HUS domain interaction. An interaction with RAB1B region spans residues 1–378 (MVDKNIYIIQ…SVHDMDYVNP (378 aa)). Disordered regions lie at residues 215–256 (KMRA…NGAT) and 291–370 (DSGL…SASV). The segment covering 227 to 241 (WKKQKRSPRPPRHMT) has biased composition (basic residues). The segment covering 316 to 328 (RESTTTESGSNEI) has biased composition (polar residues). Phosphoserine occurs at positions 349 and 352. Thr-505 is modified (phosphothreonine). Residues 528 to 548 (RIPSFVTELYINYDCDYYCAN) are HUS (homology upstream of Sec7); DCB:HUS domain interaction. The tract at residues 601–626 (QEKKETSRPSYEAVDSTQEANSTERA) is disordered. Residues 615-625 (DSTQEANSTER) show a composition bias toward polar residues. In terms of domain architecture, SEC7 spans 690 to 880 (ELIEIKNKKK…EDMYHAIKNE (191 aa)). A phosphatidylinositol-phosphate binding; required for translocation to the leading edge and for ARF1 activation upon GPCR signaling region spans residues 884–1370 (MPEEQTGLVR…LSRPSPSPLV (487 aa)). The segment covering 1284 to 1294 (TARADAPDAGA) has biased composition (low complexity). Positions 1284–1333 (TARADAPDAGAQSDSELPSYHQNDVSLDRGYTSDSEVYTDHGRPGKIHRS) are disordered. Positions 1295–1308 (QSDSELPSYHQNDV) are enriched in polar residues. At Ser-1296 the chain carries Phosphoserine. Position 1314 is a phosphotyrosine (Tyr-1314). Residues Ser-1316, Ser-1318, and Ser-1333 each carry the phosphoserine modification. At Thr-1335 the chain carries Phosphothreonine; by AMPK. 3 disordered regions span residues 1430 to 1484 (CKSQ…EGVP), 1739 to 1806 (THLT…PPLI), and 1837 to 1856 (PVPL…SEVN). Residues 1432–1446 (SQDKRGKSHKYDSKG) are compositionally biased toward basic and acidic residues. A phosphoserine mark is found at Ser-1475 and Ser-1781. Residues 1775-1793 (SSSSPGSPVASSPSRLSPS) are compositionally biased toward low complexity.

In terms of assembly, can form homodimers and probably homotetramers. Interacts with COPG1; the interaction is independent on ARF1 activation. Interacts with ARF1, ARF3, ARF4 and ARF5. Interacts with RAB1B (GTP-bound form); required for GBF1 membrane association. Interacts with GGA1, GGA2 and GGA3. Interacts with USO1. Interacts (via SEC7 domain) with PNPLA2 (via C-terminus); the interaction is direct. Can form homodimers and probably homotetramers. Interacts with COPG1; the interaction is independent on ARF1 activation. Interacts with ARF1, ARF3, ARF4 and ARF5. Interacts with RAB1B (GTP-bound form); required for GBF1 membrane association. Interacts with GGA1, GGA2 and GGA3. Interacts with USO1. Interacts (via SEC7 domain) with PNPLA2 (via C-terminus); the interaction is direct. Interacts with ARMH3.

It localises to the golgi apparatus. The protein localises to the cis-Golgi network. The protein resides in the endoplasmic reticulum-Golgi intermediate compartment. It is found in the trans-Golgi network. Its subcellular location is the cytoplasm. It localises to the lipid droplet. The protein localises to the membrane. With respect to regulation, inhibited by brefeldin A (BFA). Inhibited by golgicide A (GCA). Functionally, guanine-nucleotide exchange factor (GEF) for members of the Arf family of small GTPases involved in trafficking in the early secretory pathway; its GEF activity initiates the coating of nascent vesicles via the localized generation of activated ARFs through replacement of GDP with GTP. Recruitment to cis-Golgi membranes requires membrane association of Arf-GDP and can be regulated by ARF1, ARF3, ARF4 and ARF5. Involved in the recruitment of the COPI coat complex to cellular membranes such as the endoplasmic reticulum exit sites (ERES), and the endoplasmic reticulum-Golgi intermediate (ERGIC) and cis-Golgi compartments implicating ARF1 activation. Involved in COPI vesicle-dependent retrograde transport from the ERGIC and cis-Golgi compartments to the endoplasmic reticulum (ER). Involved in the trans-Golgi network recruitment of GGA1, GGA2, GGA3, BIG1, BIG2, and the AP-1 adaptor protein complex related to chlathrin-dependent transport; the function requires its GEF activity (probably at least in part on ARF4 and ARF5). Has GEF activity towards ARF1. Has in vitro GEF activity towards ARF5. Involved in the processing of PSAP. Required for the assembly of the Golgi apparatus. The AMPK-phosphorylated form is involved in Golgi disassembly during mitotis and under stress conditions. May be involved in the COPI vesicle-dependent recruitment of PNPLA2 to lipid droplets. In neutrophils, involved in G protein-coupled receptor (GPCR)-mediated chemotaxis und superoxide production. Proposed to be recruited by phosphatidylinositol-phosphates generated upon GPCR stimulation to the leading edge where it recruits and activates ARF1, and is involved in recruitment of GIT2 and the NADPH oxidase complex. Plays a role in maintaining mitochondrial morphology. The sequence is that of Golgi-specific brefeldin A-resistance guanine nucleotide exchange factor 1 (GBF1) from Cricetulus griseus (Chinese hamster).